The chain runs to 232 residues: 7-cyano-7-deazaguanine synthase (232 aa).

13–23 (LSGGLDSATVL) contacts ATP. Zn(2+)-binding residues include C194, C204, C207, and C210.

The protein belongs to the QueC family. It depends on Zn(2+) as a cofactor.

The enzyme catalyses 7-carboxy-7-deazaguanine + NH4(+) + ATP = 7-cyano-7-deazaguanine + ADP + phosphate + H2O + H(+). It functions in the pathway purine metabolism; 7-cyano-7-deazaguanine biosynthesis. Its function is as follows. Catalyzes the ATP-dependent conversion of 7-carboxy-7-deazaguanine (CDG) to 7-cyano-7-deazaguanine (preQ(0)). In Hydrogenovibrio crunogenus (strain DSM 25203 / XCL-2) (Thiomicrospira crunogena), this protein is 7-cyano-7-deazaguanine synthase.